The chain runs to 162 residues: Mitochondrial intermembrane space import and assembly protein 40 homolog (162 aa).

The disordered stretch occupies residues 1-61 (MGQAQSDENS…DNENESLEAK (61 aa)). Residues 9–18 (NSIPTTTTTN) are compositionally biased toward low complexity. Intrachain disulfides connect C68–C70, C79–C112, and C89–C102. The 45-residue stretch at 76-120 (NGSCGSQFSEAFLCFLKSTAEEKGSDCVNPFVALQSCINANPDAF) folds into the CHCH domain. 2 consecutive short sequence motifs (cx9C motif) follow at residues 79–89 (CGSQFSEAFLC) and 102–112 (CVNPFVALQSC). Positions 119–162 (AFSKSVTGDEKETEKKEEQPPVQDHRIIPPLWAKDPPRSGNSKL) are disordered. The span at 125–145 (TGDEKETEKKEEQPPVQDHRI) shows a compositional bias: basic and acidic residues.

It localises to the mitochondrion intermembrane space. It is found in the peroxisome matrix. Its function is as follows. Required for the import and folding of small cysteine-containing proteins in the mitochondrial intermembrane space. Involved in the mitochondrial oxidative folding of the copper-zinc superoxide dismutase CSD1, the copper chaperone for superoxide dismutase CCS, and subunits of the mitochondrial membrane respiratory chain NADH dehydrogenase (Complex I). Involved in the peroxisomal oxidative folding of the copper-zinc superoxide dismutase CSD3, and the fatty acid beta-oxidation multifunctional protein AIM1. The polypeptide is Mitochondrial intermembrane space import and assembly protein 40 homolog (Arabidopsis thaliana (Mouse-ear cress)).